A 1090-amino-acid polypeptide reads, in one-letter code: Leucine-rich repeat receptor-like serine/threonine-protein kinase RGI4 (1090 aa).

The first 20 residues, 1–20 (MPRNPRFCFFLFLLFHSSLF), serve as a signal peptide directing secretion. The Extracellular portion of the chain corresponds to 21 to 702 (FSIPCFSIDE…IQTRHRSAVK (682 aa)). An LRR 1 repeat occupies 36–59 (LSWKSQLNISGDALSSWKASESNP). Asn-43 carries N-linked (GlcNAc...) asparagine glycosylation. Cys-60 and Cys-67 are disulfide-bonded. 4 LRR repeats span residues 95-119 (IKSL…LGDL), 120-143 (SELE…IFKL), 145-166 (KLKI…ELGN), and 168-191 (VNLI…IGEL). Asn-107 carries N-linked (GlcNAc...) asparagine glycosylation. 4 consecutive short sequence motifs (small peptide recognition) follow at residues 176–177 (FD), 198–201 (RAGG), 221–226 (TLGLAE), and Tyr-249. LRR repeat units lie at residues 216 to 240 (CESL…IGNL), 242 to 264 (KVQT…IGNC), 265 to 288 (TELQ…MGRL), 289 to 312 (KKLQ…LGTC), 314 to 335 (ELFL…SFGN), 336 to 360 (LPNL…LANC), and 362 to 386 (KLTH…KLTS). N-linked (GlcNAc...) asparagine glycosylation occurs at Asn-263. The CLE45 peptide binding motif lies at 269–273 (NLYLY). The short motif at 271–273 (YLY) is the Small peptide recognition element. 2 consecutive short sequence motifs (small peptide recognition) follow at residues 319 to 322 (DLSE) and 341 to 343 (ELQ). The N-linked (GlcNAc...) asparagine glycan is linked to Asn-359. 2 consecutive short sequence motifs (small peptide recognition) follow at residues 389 to 393 (MFFAW) and 415 to 418 (DLSY). LRR repeat units follow at residues 408 to 432 (CQEL…IFEI), 434 to 456 (NLTK…IGNC), 457 to 480 (TNLY…IGNL), 481 to 504 (KNLN…ISGC), 506 to 526 (SLEF…GTLP), 527 to 550 (KSLQ…IGSL), 551 to 574 (TELT…ISSC), 576 to 598 (SLQL…LGRI), 600 to 622 (SLAI…RFSS), 623 to 646 (LTNL…LADL), and 647 to 670 (QNLV…LFFR). Asn-420 and Asn-434 each carry an N-linked (GlcNAc...) asparagine glycan. The Small peptide recognition signature appears at 437 to 441 (KLLLL). N-linked (GlcNAc...) asparagine glycosylation occurs at Asn-455. A Small peptide recognition motif is present at residues 461 to 463 (RLR). N-linked (GlcNAc...) asparagine glycosylation occurs at Asn-606. An N-linked (GlcNAc...) asparagine glycan is attached at Asn-653. Residues 703–723 (VTMSILVAASVVLVLMAVYTL) form a helical membrane-spanning segment. Topologically, residues 724-1090 (VKAQRITGKQ…CSFAYSDESV (367 aa)) are cytoplasmic. Positions 758 to 1040 (LTSANVIGTG…KDIVAMLKEI (283 aa)) constitute a Protein kinase domain. ATP is bound by residues 764-772 (IGTGSSGVV) and Lys-786. Residues Tyr-829 and Tyr-869 each carry the phosphotyrosine modification. Asp-882 functions as the Proton acceptor in the catalytic mechanism. Residue Tyr-932 is modified to Phosphotyrosine. One copy of the LRR 24 repeat lies at 1037–1060 (LKEIRQFDMDRSESDMIKGGKCEK). The disordered stretch occupies residues 1054-1079 (KGGKCEKWQPQPLPPEKIVSTPRGSS).

The protein belongs to the protein kinase superfamily. Ser/Thr protein kinase family. In terms of assembly, self-interacts. Interacts with RGF1; this interaction triggers its phosphorylation and ubiquitination and the formation of heterodimers with SERK1. Autophosphorylated. Post-translationally, phosphorylated and ubiquitinated upon interaction with RGF1, thus leading to activation a subsequent degradation. As to expression, expressed in floers, pollen grains and stipules. Present in roots.

It is found in the cell membrane. It carries out the reaction L-seryl-[protein] + ATP = O-phospho-L-seryl-[protein] + ADP + H(+). The enzyme catalyses L-threonyl-[protein] + ATP = O-phospho-L-threonyl-[protein] + ADP + H(+). In terms of biological role, receptor with a serine/threonine-protein kinase activity. Together with SKM1, LRR-rich receptor-like kinase (LRR-RLK) required for male fertility by the perception of CLE43 and CLE45 peptides and the transduction of their promoting action in pollen tubes, especially under relatively high temperature (at 30 degrees Celsius), thus conferring tolerance against high temperature probably through the maintenance of mitochondrial activity. Seems to not be involved in the perception of CLE45 peptide in roots. Together with RGI1, RGI2, RGI3, RGI4 and RGI5, acts as receptor of RGF1, a peptide hormone that maintains the postembryonic root stem cell niche by regulating the expression levels and patterns of the transcription factor PLETHORA (PLT). Links RGF1 signal with its downstream components. This Arabidopsis thaliana (Mouse-ear cress) protein is Leucine-rich repeat receptor-like serine/threonine-protein kinase RGI4.